A 399-amino-acid polypeptide reads, in one-letter code: Acetate kinase (399 aa).

Asn7 provides a ligand contact to Mg(2+). Position 14 (Lys14) interacts with ATP. Substrate is bound at residue Arg91. The active-site Proton donor/acceptor is Asp148. Residues 208-212 (HLGNG) and 283-285 (DFR) each bind ATP. Glu384 contributes to the Mg(2+) binding site.

The protein belongs to the acetokinase family. As to quaternary structure, homodimer. The cofactor is Mg(2+). Requires Mn(2+) as cofactor.

Its subcellular location is the cytoplasm. The enzyme catalyses acetate + ATP = acetyl phosphate + ADP. Its pathway is metabolic intermediate biosynthesis; acetyl-CoA biosynthesis; acetyl-CoA from acetate: step 1/2. In terms of biological role, catalyzes the formation of acetyl phosphate from acetate and ATP. Can also catalyze the reverse reaction. In Dictyoglomus thermophilum (strain ATCC 35947 / DSM 3960 / H-6-12), this protein is Acetate kinase.